Consider the following 511-residue polypeptide: Histidine ammonia-lyase (511 aa).

The segment at residues 142–144 is a cross-link (5-imidazolinone (Ala-Gly)); it reads ASG. Serine 143 carries the 2,3-didehydroalanine (Ser) modification.

The protein belongs to the PAL/histidase family. Contains an active site 4-methylidene-imidazol-5-one (MIO), which is formed autocatalytically by cyclization and dehydration of residues Ala-Ser-Gly.

It is found in the cytoplasm. The enzyme catalyses L-histidine = trans-urocanate + NH4(+). It functions in the pathway amino-acid degradation; L-histidine degradation into L-glutamate; N-formimidoyl-L-glutamate from L-histidine: step 1/3. The protein is Histidine ammonia-lyase (hutH) of Rhizobium meliloti (strain 1021) (Ensifer meliloti).